We begin with the raw amino-acid sequence, 467 residues long: Transcription factor TGAL7 (467 aa).

Basic and acidic residues predominate over residues 1–10 (MGGSREEDRQ). 2 disordered regions span residues 1–42 (MGGS…KESS) and 105–184 (QLQV…KTLR). The span at 25–41 (SSSPTTMIASSSMSKES) shows a compositional bias: low complexity. A compositionally biased stretch (polar residues) spans 120 to 129 (QGGQKINSSV). The span at 145–157 (KDNKNSSLIKKEG) shows a compositional bias: basic and acidic residues. Residues 158–168 (SSSGKGATTSN) show a composition bias toward polar residues. The segment covering 169–182 (DPEREGRRTLDPKT) has biased composition (basic and acidic residues). The bZIP domain maps to 179–223 (DPKTLRRLAQNREAARKSRLRKKAYIQQLESSRIRLSQLEQQVHV). The tract at residues 181-201 (KTLRRLAQNREAARKSRLRKK) is basic motif. The segment at 207-221 (LESSRIRLSQLEQQV) is leucine-zipper. Residues 247 to 458 (ASLFDLEYGR…RALSTLWVAR (212 aa)) enclose the DOG1 domain.

The protein belongs to the bZIP family. In terms of assembly, interacts with NPR5/NH4, NH5.1 and NH5.2.

It is found in the nucleus. Functionally, transcriptional regulator involved in defense response. In Oryza sativa subsp. japonica (Rice), this protein is Transcription factor TGAL7.